We begin with the raw amino-acid sequence, 94 residues long: Large ribosomal subunit protein uL23 (94 aa).

It belongs to the universal ribosomal protein uL23 family. In terms of assembly, part of the 50S ribosomal subunit. Contacts protein L29, and trigger factor when it is bound to the ribosome.

Functionally, one of the early assembly proteins it binds 23S rRNA. One of the proteins that surrounds the polypeptide exit tunnel on the outside of the ribosome. Forms the main docking site for trigger factor binding to the ribosome. The polypeptide is Large ribosomal subunit protein uL23 (Pelobacter propionicus (strain DSM 2379 / NBRC 103807 / OttBd1)).